We begin with the raw amino-acid sequence, 102 residues long: Small ribosomal subunit protein uS10 (102 aa).

The tract at residues 34–58 (VSGPVPLPTKTLEVPSRKSPDGEGT) is disordered.

It belongs to the universal ribosomal protein uS10 family. In terms of assembly, part of the 30S ribosomal subunit.

Involved in the binding of tRNA to the ribosomes. In Halobacterium salinarum (strain ATCC 29341 / DSM 671 / R1), this protein is Small ribosomal subunit protein uS10.